The following is a 233-amino-acid chain: Small ribosomal subunit protein uS3 (233 aa).

Residues 39 to 107 (IRAFLKRKLY…DVNINIKEER (69 aa)) enclose the KH type-2 domain. Over residues 212–222 (MQPEKTEESAP) the composition is skewed to basic and acidic residues. A disordered region spans residues 212–233 (MQPEKTEESAPAKKSRRTRRGK). A compositionally biased stretch (basic residues) spans 224–233 (KKSRRTRRGK).

This sequence belongs to the universal ribosomal protein uS3 family. Part of the 30S ribosomal subunit. Forms a tight complex with proteins S10 and S14.

Functionally, binds the lower part of the 30S subunit head. Binds mRNA in the 70S ribosome, positioning it for translation. This is Small ribosomal subunit protein uS3 from Campylobacter jejuni subsp. doylei (strain ATCC BAA-1458 / RM4099 / 269.97).